The primary structure comprises 511 residues: ATP synthase subunit alpha 2 (511 aa).

173-180 (GDRQTGKS) provides a ligand contact to ATP.

This sequence belongs to the ATPase alpha/beta chains family. F-type ATPases have 2 components, CF(1) - the catalytic core - and CF(0) - the membrane proton channel. CF(1) has five subunits: alpha(3), beta(3), gamma(1), delta(1), epsilon(1). CF(0) has three main subunits: a(1), b(2) and c(9-12). The alpha and beta chains form an alternating ring which encloses part of the gamma chain. CF(1) is attached to CF(0) by a central stalk formed by the gamma and epsilon chains, while a peripheral stalk is formed by the delta and b chains.

Its subcellular location is the cell inner membrane. The enzyme catalyses ATP + H2O + 4 H(+)(in) = ADP + phosphate + 5 H(+)(out). Produces ATP from ADP in the presence of a proton gradient across the membrane. The alpha chain is a regulatory subunit. The polypeptide is ATP synthase subunit alpha 2 (Nitrosospira multiformis (strain ATCC 25196 / NCIMB 11849 / C 71)).